The following is a 372-amino-acid chain: N-methyl-L-tryptophan oxidase (372 aa).

4-34 (DLIIIGSGSVGAAAGYYATRAGLNVLMTDAH) is a binding site for FAD. An S-8alpha-FAD cysteine modification is found at C308.

Belongs to the MSOX/MTOX family. MTOX subfamily. Monomer. FAD is required as a cofactor.

The catalysed reaction is N(alpha)-methyl-L-tryptophan + O2 + H2O = L-tryptophan + formaldehyde + H2O2. Its function is as follows. Catalyzes the oxidative demethylation of N-methyl-L-tryptophan. The sequence is that of N-methyl-L-tryptophan oxidase from Escherichia coli O7:K1 (strain IAI39 / ExPEC).